Here is a 194-residue protein sequence, read N- to C-terminus: Ferredoxin, apicoplast (194 aa).

Residues 1 to 19 (MNIVILLLILTFSIKHSNT) constitute an apicoplast transit peptide. Positions 99 to 189 (YNITLRTNDG…DCVIETHKED (91 aa)) constitute a 2Fe-2S ferredoxin-type domain. [2Fe-2S] cluster is bound by residues Cys135, Cys140, Cys143, and Cys173.

The protein belongs to the 2Fe2S plant-type ferredoxin family. [2Fe-2S] cluster serves as cofactor.

Its subcellular location is the plastid. The protein resides in the apicoplast. Ferredoxins are iron-sulfur proteins that transfer electrons in a wide variety of metabolic reactions. By transferring electrons to 4-hydroxy-3-methylbut-2-enyl diphosphate reductase LytB/IspH, plays a role in the terminal step of the DOXP/MEP pathway for isoprenoid precursor biosynthesis. The protein is Ferredoxin, apicoplast of Plasmodium falciparum (isolate 3D7).